Consider the following 150-residue polypeptide: Large ribosomal subunit protein bL9 (150 aa).

The protein belongs to the bacterial ribosomal protein bL9 family.

In terms of biological role, binds to the 23S rRNA. In Mycoplasma genitalium (strain ATCC 33530 / DSM 19775 / NCTC 10195 / G37) (Mycoplasmoides genitalium), this protein is Large ribosomal subunit protein bL9.